Consider the following 247-residue polypeptide: Uridylate kinase (247 aa).

18 to 21 (KLSG) contributes to the ATP binding site. Residue Gly-60 coordinates UMP. ATP-binding residues include Gly-61 and Arg-65. Residues Asp-80 and 141–148 (TGNPFFTT) contribute to the UMP site. ATP-binding residues include Thr-168, Tyr-174, and Asp-177.

Belongs to the UMP kinase family. In terms of assembly, homohexamer.

Its subcellular location is the cytoplasm. It carries out the reaction UMP + ATP = UDP + ADP. The protein operates within pyrimidine metabolism; CTP biosynthesis via de novo pathway; UDP from UMP (UMPK route): step 1/1. With respect to regulation, inhibited by UTP. Catalyzes the reversible phosphorylation of UMP to UDP. This is Uridylate kinase from Stutzerimonas stutzeri (strain A1501) (Pseudomonas stutzeri).